Here is a 796-residue protein sequence, read N- to C-terminus: MKNLNGRAHNACYHPYYQQQLQQQQQQQQQHQQQQLLQQQQQQLLQQQQQQLQQQLQLPYATQYTQQQQQQQQQYNQQQYYNQQLQQQQQQQQQQHLLRQQQLLPTQSAYQQQQSKQSYNNNNNSNSNSNTSAANMTAMTARVNMHAATVATAHSNGNSNANANATTAAMAAMCQMQSFLSHQQQQQQQQQQQQQYNNNCAHINYNQQQQQQQQQQQQQQQLPTATTATTTNGDKLALDSASEIANFLASELFMQQLVTFDGIQSAPTLTTPTLTPTTLRTIEETIFELTTETQNVPFQAGFKPPPLTSLCNVTVVNNNNNNNNNNNNNSSNNNNNNSNTVTTTAAAAGNLTLASPMSTMSTLNTNPQLDLLGFNCGSVPESDSEQSNVSWNVGGPHDDQSTTDTSSAATDSTSYQNGGHMFGNNGSNGSGVNNFTGSLAGVGSAGRGTSSTSNNATPARRGGGRRPNKSANMSPEEEEKRRVRRERNKLAAARCRKRRVDQTNELSEEVDGLLKKNEDLKKEIEILTNTRHQLNFVLEAHRPTCQKVRDDLLSVTTCNGLIAPTAMLSSGSNGSHHHNSNSNNSNNNNSNNNNNSNSNDSSCGTITGFDASLNSTGRSNSPLDLKPVLIDDQLLVNIKHEPHDAGLDSSSSLDQDGPPAAKRFALPDIATLKPHSASLTTPTGPVASLNTPMSGMAPTAFGIHAKPMPKTRPNTLNVNQSLAQPGNIAIGKTPMQIEGVPIQTPSAGNFNFDSLMAGGTGLTPVSGPLVPTCSSQNKHPLELPTPTSEPSKLVSL.

Disordered regions lie at residues 109–132 (AYQQ…SNTS), 315–341 (VVNN…SNTV), 374–429 (FNCG…GSNG), and 442–490 (VGSA…RNKL). A compositionally biased stretch (low complexity) spans 402-429 (TTDTSSAATDSTSYQNGGHMFGNNGSNG). Residues 447-457 (RGTSSTSNNAT) are compositionally biased toward polar residues. One can recognise a bZIP domain in the interval 478–541 (EEKRRVRRER…HQLNFVLEAH (64 aa)). The tract at residues 480–499 (KRRVRRERNKLAAARCRKRR) is basic motif. Residues 506–534 (LSEEVDGLLKKNEDLKKEIEILTNTRHQL) are leucine-zipper. The segment at 569–601 (SSGSNGSHHHNSNSNNSNNNNSNNNNNSNSNDS) is disordered. Position 621 is a phosphoserine (S621). Disordered regions lie at residues 642–661 (PHDA…PPAA) and 774–796 (SSQN…LVSL).

The protein belongs to the bZIP family. Fos subfamily. Homodimer. Heterodimer with Jra. The kay-Jra heterodimer binds more stably to the AP-1 site than either of the two proteins alone.

Its subcellular location is the nucleus. Functionally, developmentally regulated transcription factor AP-1 binds and recognizes the enhancer DNA sequence: 5'-TGA[CG]TCA-3'. May play a role in the function or determination of a particular subset of cells in the developing embryo. It is able to carry out its function either independently of or in conjunction with Jra. The polypeptide is Transcription factor kayak (Drosophila grimshawi (Hawaiian fruit fly)).